The sequence spans 687 residues: Putative metabolite transport protein YDL199C (687 aa).

The tract at residues 1-22 (MKPPLNMSRSNKPLTQEANSSA) is disordered. At 1-122 (MKPPLNMSRS…RHSSRVLRTS (122 aa)) the chain is on the extracellular side. Residues 7–22 (MSRSNKPLTQEANSSA) show a composition bias toward polar residues. The residue at position 90 (Ser90) is a Phosphoserine. A helical membrane pass occupies residues 123 to 143 (FISFVVLVSSLSGLDQGLISG). Topologically, residues 144-164 (NVMTLSFQKYFHYPLTSPLGN) are cytoplasmic. The chain crosses the membrane as a helical span at residues 165–185 (IVSIVNLGAFMASLFVYSGIL). At 186–192 (EPCSRKK) the chain is on the extracellular side. Residues 193 to 213 (MLQISTMIYSLGAIVQVLALN) form a helical membrane-spanning segment. The Cytoplasmic segment spans residues 214 to 216 (QWC). The helical transmembrane segment at 217–237 (LLLGRFLLGVGMGFAFSMVII) threads the bilayer. Over 238–251 (YQFEFPLPCIRKRT) the chain is Extracellular. Residues 252–272 (LISIQCVSSVIAYSFGIWINC) form a helical membrane-spanning segment. The Cytoplasmic portion of the chain corresponds to 273-283 (AFRYLGFAWRY). Residues 284–304 (PLSTHVALGIILNLMSFYLIL) traverse the membrane as a helical segment. Residues 305–410 (ESPSWLLKQK…MGRGERKSIY (106 aa)) are Extracellular-facing. The helical transmembrane segment at 411 to 431 (LTGLNALIYSIVILAYVPLVL) threads the bilayer. Over 432-439 (RKRKEKTN) the chain is Cytoplasmic. A helical transmembrane segment spans residues 440–460 (VLLGSIVMCALLFTISFTDWF). Over 461-469 (PKSTTRYIS) the chain is Extracellular. A helical membrane pass occupies residues 470–490 (ILFAVFLFTHFISWDSIGWVM). The Cytoplasmic segment spans residues 491 to 500 (TIELLPHLSQ). A helical transmembrane segment spans residues 501-521 (APVILLVSNFYWIFKWFVSLI). Residues 522 to 533 (TPILIDRLSWKF) lie on the Extracellular side of the membrane. The helical transmembrane segment at 534–554 (YLIPSLSSFISIIFVLKIFPI) threads the bilayer. The Cytoplasmic portion of the chain corresponds to 555–687 (ETRDERLDSD…QNSPGDMAVA (133 aa)). Disordered stretches follow at residues 561 to 587 (LDSDDDSTGNGSGNHDDVFDDTGSEFS) and 654 to 687 (SFHNRTDPNISDNIAANKPSSGGGQNSPGDMAVA). Residues 660–673 (DPNISDNIAANKPS) show a composition bias toward polar residues.

This sequence belongs to the major facilitator superfamily. Sugar transporter (TC 2.A.1.1) family.

It localises to the membrane. In Saccharomyces cerevisiae (strain ATCC 204508 / S288c) (Baker's yeast), this protein is Putative metabolite transport protein YDL199C.